The sequence spans 640 residues: Probable inactive receptor kinase At3g08680 (640 aa).

The first 22 residues, M1–S22, serve as a signal peptide directing secretion. LRR repeat units follow at residues A93–L115, F117–H138, R139–T162, Q163–L185, and K186–F206. The disordered stretch occupies residues L222 to G249. A compositionally biased stretch (low complexity) spans P226–N247. A helical transmembrane segment spans residues G260–I280. Positions D289 to G315 are disordered. Residues R341–I614 enclose the Protein kinase domain. S343 is modified (phosphoserine). Position 347–355 (L347–T355) interacts with ATP. T364 carries the phosphothreonine modification. Residue K369 participates in ATP binding. A phosphothreonine mark is found at T441, T514, and T564. Residues E612–V640 form a disordered region.

Belongs to the protein kinase superfamily. Tyr protein kinase family.

The protein resides in the membrane. The sequence is that of Probable inactive receptor kinase At3g08680 from Arabidopsis thaliana (Mouse-ear cress).